The primary structure comprises 82 residues: Sec-independent protein translocase protein TatA (82 aa).

A helical transmembrane segment spans residues 1–21 (MGGISIWQLLIIAVIVVLLFG).

This sequence belongs to the TatA/E family. In terms of assembly, the Tat system comprises two distinct complexes: a TatABC complex, containing multiple copies of TatA, TatB and TatC subunits, and a separate TatA complex, containing only TatA subunits. Substrates initially bind to the TatABC complex, which probably triggers association of the separate TatA complex to form the active translocon.

The protein localises to the cell inner membrane. Functionally, part of the twin-arginine translocation (Tat) system that transports large folded proteins containing a characteristic twin-arginine motif in their signal peptide across membranes. TatA could form the protein-conducting channel of the Tat system. This Vibrio cholerae serotype O1 (strain ATCC 39315 / El Tor Inaba N16961) protein is Sec-independent protein translocase protein TatA.